The primary structure comprises 1396 residues: uncharacterized protein (1396 aa).

ATP is bound at residue 88-95 (AYKKWGRS). 2 disordered regions span residues 146 to 165 (EKIH…LSPT) and 198 to 388 (KPCS…VKDL). The span at 198–221 (KPCSYSSSSSSSTVPPASTDTSSP) shows a compositional bias: low complexity. Residues 242–268 (MHEKAQSRSRHEKESKLSSSTIEEKPA) are compositionally biased toward basic and acidic residues. Residues 286–300 (SWSSGSSEAGSSSSG) show a composition bias toward low complexity. The segment covering 312–327 (VKVRHKAREIRNRKGR) has biased composition (basic residues). A phosphoserine mark is found at Ser-817 and Ser-1083. The disordered stretch occupies residues 1113-1137 (PISASELSPGGGSESEFESEKDEAS). Phosphoserine is present on residues Ser-1197 and Ser-1339. The segment at 1347 to 1396 (TGERGSETKPNGLHRKMCSSASSDTGDTGSEAGGEWVGPSREELFSRTHL) is disordered. Low complexity predominate over residues 1365–1376 (SSASSDTGDTGS). The segment covering 1386–1396 (SREELFSRTHL) has biased composition (basic and acidic residues).

This is an uncharacterized protein from Mus musculus (Mouse).